We begin with the raw amino-acid sequence, 206 residues long: Dephospho-CoA kinase (206 aa).

Positions 4–200 (TVALTGGIGS…ASYLKLASQF (197 aa)) constitute a DPCK domain. ATP is bound at residue 12–17 (GSGKST).

Belongs to the CoaE family.

Its subcellular location is the cytoplasm. The enzyme catalyses 3'-dephospho-CoA + ATP = ADP + CoA + H(+). It functions in the pathway cofactor biosynthesis; coenzyme A biosynthesis; CoA from (R)-pantothenate: step 5/5. In terms of biological role, catalyzes the phosphorylation of the 3'-hydroxyl group of dephosphocoenzyme A to form coenzyme A. The chain is Dephospho-CoA kinase from Salmonella typhimurium (strain LT2 / SGSC1412 / ATCC 700720).